Reading from the N-terminus, the 273-residue chain is Ribosomal RNA small subunit methyltransferase A (273 aa).

Residues N18, L20, G45, E66, D91, and N113 each coordinate S-adenosyl-L-methionine.

The protein belongs to the class I-like SAM-binding methyltransferase superfamily. rRNA adenine N(6)-methyltransferase family. RsmA subfamily.

The protein localises to the cytoplasm. The enzyme catalyses adenosine(1518)/adenosine(1519) in 16S rRNA + 4 S-adenosyl-L-methionine = N(6)-dimethyladenosine(1518)/N(6)-dimethyladenosine(1519) in 16S rRNA + 4 S-adenosyl-L-homocysteine + 4 H(+). Specifically dimethylates two adjacent adenosines (A1518 and A1519) in the loop of a conserved hairpin near the 3'-end of 16S rRNA in the 30S particle. May play a critical role in biogenesis of 30S subunits. The protein is Ribosomal RNA small subunit methyltransferase A of Shigella boydii serotype 18 (strain CDC 3083-94 / BS512).